A 107-amino-acid polypeptide reads, in one-letter code: Large ribosomal subunit protein eL33B (107 aa).

An N-acetylalanine; partial modification is found at A2. A Glycyl lysine isopeptide (Lys-Gly) (interchain with G-Cter in ubiquitin) cross-link involves residue K47.

The protein belongs to the eukaryotic ribosomal protein eL33 family. As to quaternary structure, component of the large ribosomal subunit (LSU). Mature yeast ribosomes consist of a small (40S) and a large (60S) subunit. The 40S small subunit contains 1 molecule of ribosomal RNA (18S rRNA) and 33 different proteins (encoded by 57 genes). The large 60S subunit contains 3 rRNA molecules (25S, 5.8S and 5S rRNA) and 46 different proteins (encoded by 81 genes). In terms of processing, N-terminally acetylated by acetyltransferase NatA.

The protein resides in the cytoplasm. In terms of biological role, component of the ribosome, a large ribonucleoprotein complex responsible for the synthesis of proteins in the cell. The small ribosomal subunit (SSU) binds messenger RNAs (mRNAs) and translates the encoded message by selecting cognate aminoacyl-transfer RNA (tRNA) molecules. The large subunit (LSU) contains the ribosomal catalytic site termed the peptidyl transferase center (PTC), which catalyzes the formation of peptide bonds, thereby polymerizing the amino acids delivered by tRNAs into a polypeptide chain. The nascent polypeptides leave the ribosome through a tunnel in the LSU and interact with protein factors that function in enzymatic processing, targeting, and the membrane insertion of nascent chains at the exit of the ribosomal tunnel. The sequence is that of Large ribosomal subunit protein eL33B from Saccharomyces cerevisiae (strain ATCC 204508 / S288c) (Baker's yeast).